Consider the following 208-residue polypeptide: ATP phosphoribosyltransferase (208 aa).

This sequence belongs to the ATP phosphoribosyltransferase family. Short subfamily. As to quaternary structure, heteromultimer composed of HisG and HisZ subunits.

Its subcellular location is the cytoplasm. It catalyses the reaction 1-(5-phospho-beta-D-ribosyl)-ATP + diphosphate = 5-phospho-alpha-D-ribose 1-diphosphate + ATP. It functions in the pathway amino-acid biosynthesis; L-histidine biosynthesis; L-histidine from 5-phospho-alpha-D-ribose 1-diphosphate: step 1/9. Functionally, catalyzes the condensation of ATP and 5-phosphoribose 1-diphosphate to form N'-(5'-phosphoribosyl)-ATP (PR-ATP). Has a crucial role in the pathway because the rate of histidine biosynthesis seems to be controlled primarily by regulation of HisG enzymatic activity. The protein is ATP phosphoribosyltransferase of Clostridioides difficile (strain 630) (Peptoclostridium difficile).